The sequence spans 196 residues: Probable malonic semialdehyde reductase RutE (196 aa).

This sequence belongs to the nitroreductase family. HadB/RutE subfamily. FMN is required as a cofactor.

The catalysed reaction is 3-hydroxypropanoate + NADP(+) = 3-oxopropanoate + NADPH + H(+). Functionally, may reduce toxic product malonic semialdehyde to 3-hydroxypropionic acid, which is excreted. The polypeptide is Probable malonic semialdehyde reductase RutE (Shigella flexneri serotype 5b (strain 8401)).